We begin with the raw amino-acid sequence, 142 residues long: MHLTADDKKHIKAIWPSVAAHGDKYGGEALHRMFMCAPKTKTYFPDFDFSEHSKHILAHGKKVSDALNEACNHLDNIAGCLSKLSDLHAYDLRVDPGNFPLLAHQILVVVAIHFPKQFDPATHKALDKFLVSVSNVLTSKYR.

The Globin domain occupies 2 to 142 (HLTADDKKHI…VSNVLTSKYR (141 aa)). The heme b site is built by His-59 and His-88.

Belongs to the globin family. In terms of assembly, heterotetramer of two alpha chains and two beta chains. As to expression, red blood cells.

In terms of biological role, involved in oxygen transport from the lung to the various peripheral tissues. The polypeptide is Hemoglobin subunit alpha (hba-A) (Xenopus tropicalis (Western clawed frog)).